The following is a 567-amino-acid chain: Probable transport protein (567 aa).

Residues 1-30 (MSDRVEVNERRSDSVSEKEPARDDARKDVT) show a composition bias toward basic and acidic residues. A disordered region spans residues 1–38 (MSDRVEVNERRSDSVSEKEPARDDARKDVTDDQEDAPP). The Cytoplasmic segment spans residues 1-46 (MSDRVEVNERRSDSVSEKEPARDDARKDVTDDQEDAPPFMTANNAR). The helical transmembrane segment at 47–67 (VMLVQAIGGSLNGYSIGFVGV) threads the bilayer. At 68 to 160 (YSTLFGYSTN…PSGYSSSESG (93 aa)) the chain is on the extracellular side. A helical membrane pass occupies residues 161–181 (IFAGSMIAGCLIGSVFAGPLA). Residues 182–189 (SKIGARLS) are Cytoplasmic-facing. The chain crosses the membrane as a helical span at residues 190–210 (FLLVGLVGVVASVMYHASCAA). Over 211-212 (DE) the chain is Extracellular. The chain crosses the membrane as a helical span at residues 213–233 (FWVLIVGRFVIGLFLGVICVA). The Cytoplasmic portion of the chain corresponds to 234 to 249 (CPVYTDQNAHPKWKRT). A helical membrane pass occupies residues 250–270 (IGVMFQVFTTLGIFVAALMGL). The Extracellular segment spans residues 271–289 (ALGQSIRFDHDGDQKVMAR). Residues 290-310 (MQGLCVFSTLFSLLTVVLGIV) traverse the membrane as a helical segment. At 311-341 (TRESRAKFDGGEEGRAELNPSEYGYVEMIPR) the chain is on the cytoplasmic side. A helical transmembrane segment spans residues 342–362 (LLMGCVMAGTLQLTGINAVMN). The Extracellular portion of the chain corresponds to 363–366 (YAPT). Residues 367–387 (IMGSLGLAPLVGNFVVMLWNF) form a helical membrane-spanning segment. Over 388-404 (VTTLASIPLSYVFTMRH) the chain is Cytoplasmic. A helical membrane pass occupies residues 405–425 (VFLFGSIFTSCMCLFMCGIPV). At 426-437 (YPGVSKKLEAKN) the chain is on the extracellular side. A helical membrane pass occupies residues 438 to 458 (GVAITGILLFILGFEVCVGPC). Residues 459–480 (YYVLTQDMFPPSFRPRGASFTQ) lie on the Cytoplasmic side of the membrane. The chain crosses the membrane as a helical span at residues 481-501 (VAQFIFNLIINVCYPIATESI). Residues 502 to 514 (SGGPSGNQDKGQA) are Extracellular-facing. The helical transmembrane segment at 515–535 (VAFIFFGGLGLICFVIQVFFL) threads the bilayer. Topologically, residues 536–567 (HPWDEERDGKKVVAPAIGKKELSEESIGNRAE) are cytoplasmic.

Belongs to the major facilitator superfamily. Sugar transporter (TC 2.A.1.1) family.

The protein localises to the membrane. Probable membrane transport protein. This is Probable transport protein (PRO-1) from Leishmania enriettii.